Consider the following 291-residue polypeptide: ATP synthase gamma chain (291 aa).

The protein belongs to the ATPase gamma chain family. F-type ATPases have 2 components, CF(1) - the catalytic core - and CF(0) - the membrane proton channel. CF(1) has five subunits: alpha(3), beta(3), gamma(1), delta(1), epsilon(1). CF(0) has three main subunits: a, b and c.

It localises to the cell inner membrane. Functionally, produces ATP from ADP in the presence of a proton gradient across the membrane. The gamma chain is believed to be important in regulating ATPase activity and the flow of protons through the CF(0) complex. In Neisseria gonorrhoeae (strain NCCP11945), this protein is ATP synthase gamma chain.